We begin with the raw amino-acid sequence, 589 residues long: Cytochrome P450 monooxygenase TRI13 (589 aa).

Positions 1–21 (MFLSLCLMVLALYLLYKWALP) are cleaved as a signal peptide. Asn-52, Asn-219, Asn-243, and Asn-366 each carry an N-linked (GlcNAc...) asparagine glycan. Heme is bound at residue Cys-531.

The protein belongs to the cytochrome P450 family. Heme serves as cofactor.

Its pathway is sesquiterpene biosynthesis; trichothecene biosynthesis. In terms of biological role, cytochrome P450 monooxygenase; part of the core gene cluster that mediates the biosynthesis of trichothecenes, a very large family of chemically related bicyclic sesquiterpene compounds acting as mycotoxins, including T2-toxin. The biosynthesis of trichothecenes begins with the cyclization of farnesyl diphosphate to trichodiene and is catalyzed by the trichodiene synthase TRI5. Trichodiene undergoes a series of oxygenations catalyzed by the cytochrome P450 monooxygenase TRI4. TRI4 controls the addition of four oxygens at C-2, C-3, C-11, and the C-12, C-13-epoxide to form the intermediate isotrichotriol. Isotrichotriol then undergoes a non-enzymatic isomerization and cyclization to form isotrichodermol. During this process, the oxygen at the C-2 position becomes the pyran ring oxygen and the hydroxyl group at C-11 is lost. More complex type A trichothecenes are built by modifying isotrichodermol through a series of paired hydroxylation and acetylation or acylation steps. Isotrichodermol is converted to isotrichodermin by the acetyltransferase TRI101. TRI101 encodes a C-3 transacetylase that acts as a self-protection or resistance factor during biosynthesis and that the presence of a free C-3 hydroxyl group is a key component of Fusarium trichothecene phytotoxicity. A second hydroxyl group is added to C-15 by the trichothecene C-15 hydroxylase TRI11, producing 15-decalonectrin, which is then acetylated by TRI3, producing calonectrin. A third hydroxyl group is added at C-4 by the cytochrome P450 monooxygenase TRI13, converting calonectrin to 3,15-diacetoxyspirpenol, which is subsequently acetylated by the acetyltransferase TRI7. A fourth hydroxyl group is added to C-8 by the cytochrome P450 monooxygenase TRI1, followed by the addition of an isovaleryl moiety by TRI16. Finally, the acetyl group is removed from the C-3 position by the trichothecene C-3 esterase TRI8 to produce T-2 toxin. The sequence is that of Cytochrome P450 monooxygenase TRI13 from Fusarium sporotrichioides.